A 682-amino-acid chain; its full sequence is Pneumocandin biosynthesis cluster protein B (682 aa).

Low complexity predominate over residues 63 to 73 (SSLSSTEVTSS). Disordered stretches follow at residues 63-86 (SSLS…DAPE), 107-129 (QNTP…DTNQ), and 251-358 (SEST…SPAN). 2 stretches are compositionally biased toward polar residues: residues 257-279 (NTGS…SHSS) and 310-320 (PRQTTEATPCD). A compositionally biased stretch (basic and acidic residues) spans 335–349 (PERRSMKMVRKEARD).

Part of the gene cluster that mediates the biosynthesis of pneumocandins, lipohexapeptides of the echinocandin family that prevent fungal cell wall formation by non-competitive inhibition of beta-1,3-glucan synthase. The 10,12-dimethylmyristoyl side chain is synthesized by the reducing polyketide synthase gloL/GLPKS4. The thioesterase gloN/GLHYD exclusively interacts with gloL/GLPKS4 to maintain turnover of the polyketide side chain. The 10R,12S-dimethylmyristic acid is then transferred to the first thiolation domain of the nonribosomal peptide synthetase gloA/GLNRPS4 by the acyl-AMP ligase gloD/GLligase, followed by its acylation to L-ornithine to trigger elongation of the cyclic hexapeptide. L-ornithine, 4R-hydroxyl-L-proline (generated from L-proline by the dioxygenase gloF/GLOXY2), 3S-hydroxyl-L-homotyrosine (generated by gloG/GLHtyB, gloH/GLHtyA, gloI/GLHtyC, gloJ/GLHtyD and hydroxylated at C-3 by the dioxygenase gloM/GLOXY1), 3R-hydroxyl-L-glutamine (generated from L-glutamine probably by the dioxygenase gloE/GLOXY3) and 3S-hydroxyl-L-proline (generated from L-proline by the dioxygenase gloF/GLOXY2 to yield pneumocandin B0), or 3S-hydroxyl-4S-methyl-L-proline (generated from L-leucine by the dioxygenase gloC/GLOXY4 to yield pneumocandin A0) are sequentially added to the growing chain. The last C domain of gloA/GLNRPS4 is proposed to be responsible for cyclization by condensation to form the peptide bond between L-ornithine and 3S-hydroxyl-4S-methyl-L-proline (for pneumocandin A0) or 3S-hydroxyl-L-proline (for pneumocandin B0). Finally, the subsequent C-4 hydroxylation of 3S-hydroxyl-L-homotyrosine and L-ornithine dihydroxylation at C-4 and C-5 are performed by the cytochrome P450 monooxygenases gloP/GLP450-1 and gloO/GLP450-2, respectively. The polypeptide is Pneumocandin biosynthesis cluster protein B (Glarea lozoyensis (strain ATCC 20868 / MF5171)).